The chain runs to 64 residues: Large ribosomal subunit protein bL35 (64 aa).

Belongs to the bacterial ribosomal protein bL35 family.

This is Large ribosomal subunit protein bL35 from Coxiella burnetii (strain RSA 493 / Nine Mile phase I).